We begin with the raw amino-acid sequence, 109 residues long: uncharacterized protein (109 aa).

The chain crosses the membrane as a helical span at residues 90–107; it reads IICNFWGSLLGVGIAFYQ.

Its subcellular location is the membrane. This is an uncharacterized protein from Saccharomyces cerevisiae (strain ATCC 204508 / S288c) (Baker's yeast).